The primary structure comprises 433 residues: Alpha-(1,3)-fucosyltransferase 4 (433 aa).

The interval Met1 to Val20 is disordered. The Cytoplasmic portion of the chain corresponds to Met1–Ser54. A helical; Signal-anchor for type II membrane protein transmembrane segment spans residues Ser55 to Gly74. The Lumenal portion of the chain corresponds to Gln75–Arg433. 2 N-linked (GlcNAc...) asparagine glycosylation sites follow: Asn117 and Asn218.

It belongs to the glycosyltransferase 10 family. In terms of tissue distribution, in adult, highest expression in spleen, testis, brain, lung, kidney and skeletal muscle and to a lesser extent in liver and heart.

Its subcellular location is the golgi apparatus. The protein localises to the golgi stack membrane. It catalyses the reaction a beta-D-galactosyl-(1-&gt;4)-N-acetyl-beta-D-glucosaminyl derivative + GDP-beta-L-fucose = a beta-D-galactosyl-(1-&gt;4)-[alpha-L-fucosyl-(1-&gt;3)]-N-acetyl-beta-D-glucosaminyl derivative + GDP + H(+). It carries out the reaction an N-acetyl-alpha-neuraminyl-(2-&gt;3)-beta-D-galactosyl-(1-&gt;4)-N-acetyl-beta-D-glucosaminyl derivative + GDP-beta-L-fucose = an alpha-Neu5Ac-(2-&gt;3)-beta-D-Gal-(1-&gt;4)-[alpha-L-Fuc-(1-&gt;3)]-beta-D-GlcNAc derivative + GDP + H(+). The catalysed reaction is an alpha-Neu5Ac-(2-&gt;3)-beta-D-Gal-(1-&gt;4)-beta-D-GlcNAc-(1-&gt;3)-beta-D-Gal-(1-&gt;4)-beta-D-GlcNAc derivative + GDP-beta-L-fucose = an alpha-Neu5Ac-(2-&gt;3)-beta-D-Gal-(1-&gt;4)-beta-D-GlcNAc-(1-&gt;3)-beta-D-Gal-(1-&gt;4)-[alpha-L-Fuc-(1-&gt;3)]-beta-D-GlcNAc derivative + GDP + H(+). The enzyme catalyses an alpha-Neu5Ac-(2-&gt;3)-beta-D-Gal-(1-&gt;4)-beta-D-GlcNAc6S derivative + GDP-beta-L-fucose = an alpha-Neu5Ac-(2-&gt;3)-beta-D-Gal-(1-&gt;4)-[alpha-L-Fuc-(1-&gt;3)]-beta-D-GlcNAc6S derivative + GDP + H(+). Its pathway is protein modification; protein glycosylation. Its function is as follows. Catalyzes alpha(1-&gt;3) linkage of fucosyl moiety transferred from GDP-beta-L-fucose to N-acetyl glucosamine (GlcNAc) within type 2 lactosamine (LacNAc, Gal-beta(1-&gt;4)GlcNAc) glycan attached to N- or O-linked glycoproteins. Robustly fucosylates nonsialylated distal LacNAc unit of the polylactosamine chain to form Lewis X antigen (CD15), a glycan determinant known to mediate important cellular functions in development and immunity. Fucosylates with lower efficiency sialylated LacNAc acceptors to form sialyl Lewis X and 6-sulfo sialyl Lewis X determinants that serve as recognition epitopes for C-type lectins. Together with FUT7 contributes to SELE, SELL and SELP selectin ligand biosynthesis and selectin-dependent lymphocyte homing, leukocyte migration and blood leukocyte homeostasis. In a cell type specific manner, may also fucosylate the internal LacNAc unit of the polylactosamine chain to form VIM-2 antigen that serves as recognition epitope for SELE. In Rattus norvegicus (Rat), this protein is Alpha-(1,3)-fucosyltransferase 4 (Fut4).